The primary structure comprises 297 residues: 3-methyl-2-oxobutanoate hydroxymethyltransferase (297 aa).

Residues Met1 to Asn12 show a composition bias toward polar residues. The segment at Met1 to Lys36 is disordered. Residues Ala22–Pro33 show a composition bias toward low complexity. Positions 78 and 117 each coordinate Mg(2+). 3-methyl-2-oxobutanoate is bound by residues Asp78–Ser79, Asp117, and Lys147. Glu149 contributes to the Mg(2+) binding site. Glu215 functions as the Proton acceptor in the catalytic mechanism.

Belongs to the PanB family. As to quaternary structure, homodecamer; pentamer of dimers. The cofactor is Mg(2+).

The protein resides in the cytoplasm. It catalyses the reaction 3-methyl-2-oxobutanoate + (6R)-5,10-methylene-5,6,7,8-tetrahydrofolate + H2O = 2-dehydropantoate + (6S)-5,6,7,8-tetrahydrofolate. Its pathway is cofactor biosynthesis; (R)-pantothenate biosynthesis; (R)-pantoate from 3-methyl-2-oxobutanoate: step 1/2. Catalyzes the reversible reaction in which hydroxymethyl group from 5,10-methylenetetrahydrofolate is transferred onto alpha-ketoisovalerate to form ketopantoate. The protein is 3-methyl-2-oxobutanoate hydroxymethyltransferase of Mycobacterium ulcerans (strain Agy99).